The sequence spans 505 residues: RNA-splicing ligase RtcB homolog (505 aa).

Mn(2+)-binding residues include D119, C122, H227, H259, and H353. N226 to E230 is a binding site for GMP. GMP is bound by residues H353 to N354, G402 to M405, S409, H428 to G431, and K504. H428 acts as the GMP-histidine intermediate in catalysis.

Belongs to the RtcB family. Catalytic component of the tRNA-splicing ligase complex. Mn(2+) serves as cofactor.

Its subcellular location is the nucleus. The protein localises to the cytoplasm. It carries out the reaction a 3'-end 3'-phospho-ribonucleotide-RNA + a 5'-end dephospho-ribonucleoside-RNA + GTP = a ribonucleotidyl-ribonucleotide-RNA + GMP + diphosphate. It catalyses the reaction a 3'-end 2',3'-cyclophospho-ribonucleotide-RNA + a 5'-end dephospho-ribonucleoside-RNA + GTP + H2O = a ribonucleotidyl-ribonucleotide-RNA + GMP + diphosphate + H(+). In terms of biological role, catalytic subunit of the tRNA-splicing ligase complex that acts by directly joining spliced tRNA halves to mature-sized tRNAs. Required for the ligation of mRNAs and specifically, regulates xbp-1 mRNA splicing during the endoplasmic reticulum stress-induced unfolded protein response. Has a neuroprotective role in the age-dependent degeneration of dopamine neurons, which is mediated by xbp-1. This Caenorhabditis elegans protein is RNA-splicing ligase RtcB homolog.